The primary structure comprises 268 residues: MSNFQHGNYHSYYSMRGGTSIIDPRLKCLPDSLFYEASVLDIGCNNGTVSAQIASIFGASFVLGLDIDHVLIQKARKHLEFVSSRIGPVRNPGSIVEDQFNYYPISSIKKFSRIPVQLQPPLNKQNFPHNIEFETADFLRWESKRKFKIILALSVSKWVHLNNHDEGIIKFFGKISSLLETNGVLILEPQGWDSYLKAAKKISVFNQTPENLKIQPDAFEHLLNQAGLVLEYSIEPQVNNSEYKNFAKRTMYIYKKKGIGIIKLLTST.

The 236-residue stretch at Asp23 to Gly258 folds into the Bin3-type SAM domain.

The protein belongs to the methyltransferase superfamily.

In terms of biological role, probable RNA methyltransferase. This Schizosaccharomyces pombe (strain 972 / ATCC 24843) (Fission yeast) protein is Probable RNA methyltransferase C2A9.10.